We begin with the raw amino-acid sequence, 847 residues long: MATEKISPGMQQYLDIKKDYQDAFLLFRMGDFYELFYEDAVNAAQILEIALTSRNKNSENPIPMAGVPYHSAQQYIDVLIESGYKVAIAEQMEDPKQAVGVVKREVVQVITPGTVVDSSKPVGENNFLVALDRQEQAYGLAYMDLATGEFQVTSLADFDQACGEIRNLRAREVVVGYCLSEDEQQILSKQMNLLLSEVEEAMEDVQLLGDELSSLEKQTAGKLLAYVFQTQMRELSHLKKVHHYEIKDFLQMDYATKTSLDLTENARTGKKHGSLFWLMDETKTAMGGRLLRSWIQHPLIDKGRIIKRQDVVQVFLDYFFERSDLADSLKGVYDIERLVSRVSFGKTNPKDLLQLASTLSHVPQIRSILETIESPALESLVARLDAIPELENLISSAIDPDAPQVITEGNIIRTGFDETLDQYRLVMREGTSWIADIEAKEREASGITNLKIDYNKKDGYYFHVTNSQLGNVPSHFFRKATLKNSERFGTEELARIEGEMLEAREKSANLEYEIFMRIREEVGKYIQRLQALAQTLATVDVLQSFAVVAESQHLVRPSFTSSRSLQIKKGRHAVVEKVMGAQSYIPNSIELDQETDIQLITGPNMSGKSTYMRQLAMIVIMAQMGSYVPAEVASLPIFDAIFTRIGAADDLVSGQSTFMVEMMEANRAIRQASERSLILFDELGRGTATYDGMALAQAIIEYIHDRTKAKTLFATHYHELTDLSSSLTRLENVHVATLEKDGQVTFLHKIEAGPADKSYGIHVAKIAGLPTDLLRRADAILTDLENQEKREASLPASRTDSQKVSEQMSLFVEETENPVLTELRDLDIYNMTPLEVMAAVAELKKKL.

An ATP-binding site is contributed by 602–609 (GPNMSGKS). Residues 788-807 (EKREASLPASRTDSQKVSEQ) are disordered. A compositionally biased stretch (polar residues) spans 796-807 (ASRTDSQKVSEQ).

The protein belongs to the DNA mismatch repair MutS family.

In terms of biological role, this protein is involved in the repair of mismatches in DNA. It is possible that it carries out the mismatch recognition step. This protein has a weak ATPase activity. The polypeptide is DNA mismatch repair protein MutS (Streptococcus gordonii (strain Challis / ATCC 35105 / BCRC 15272 / CH1 / DL1 / V288)).